Reading from the N-terminus, the 301-residue chain is Hydroxyquinol 1,2-dioxygenase (301 aa).

Fe cation is bound by residues Y169, Y202, H226, and H228.

The protein belongs to the intradiol ring-cleavage dioxygenase family. Fe(3+) serves as cofactor.

The catalysed reaction is benzene-1,2,4-triol + O2 = maleylacetate + 2 H(+). The protein operates within aromatic compound metabolism. Involved in resorcinol degradation. Catalyzes the conversion of hydroxyquinol to malelylacetate. Also shows weak activity with catechol, 3-methylcatechol and 4-methylcatechol, but cannot use 4-chlorocatechol, 4-nitrocatechol or protocatechuate. This Corynebacterium glutamicum (strain ATCC 13032 / DSM 20300 / JCM 1318 / BCRC 11384 / CCUG 27702 / LMG 3730 / NBRC 12168 / NCIMB 10025 / NRRL B-2784 / 534) protein is Hydroxyquinol 1,2-dioxygenase.